A 239-amino-acid polypeptide reads, in one-letter code: 1-(5-phosphoribosyl)-5-[(5-phosphoribosylamino)methylideneamino] imidazole-4-carboxamide isomerase (239 aa).

Asp-8 serves as the catalytic Proton acceptor. Asp-129 serves as the catalytic Proton donor.

This sequence belongs to the HisA/HisF family.

It is found in the cytoplasm. It catalyses the reaction 1-(5-phospho-beta-D-ribosyl)-5-[(5-phospho-beta-D-ribosylamino)methylideneamino]imidazole-4-carboxamide = 5-[(5-phospho-1-deoxy-D-ribulos-1-ylimino)methylamino]-1-(5-phospho-beta-D-ribosyl)imidazole-4-carboxamide. The protein operates within amino-acid biosynthesis; L-histidine biosynthesis; L-histidine from 5-phospho-alpha-D-ribose 1-diphosphate: step 4/9. This Bacillus cereus (strain ZK / E33L) protein is 1-(5-phosphoribosyl)-5-[(5-phosphoribosylamino)methylideneamino] imidazole-4-carboxamide isomerase.